Reading from the N-terminus, the 148-residue chain is Ubiquitin-conjugating enzyme E2 13 (148 aa).

A UBC core domain is found at 2–148 (ALPKRIIKEI…AREWTKKYAV (147 aa)). Catalysis depends on cysteine 86, which acts as the Glycyl thioester intermediate.

Belongs to the ubiquitin-conjugating enzyme family. As to quaternary structure, heterodimer with spm2.

It carries out the reaction S-ubiquitinyl-[E1 ubiquitin-activating enzyme]-L-cysteine + [E2 ubiquitin-conjugating enzyme]-L-cysteine = [E1 ubiquitin-activating enzyme]-L-cysteine + S-ubiquitinyl-[E2 ubiquitin-conjugating enzyme]-L-cysteine.. The protein operates within protein modification; protein ubiquitination. Has a role in the DNA error-free postreplication repair (PRR) pathway. The ubc13/spm2 heterodimer catalyzes the synthesis of non-canonical poly-ubiquitin chains that are linked through 'Lys-63'. This chain is Ubiquitin-conjugating enzyme E2 13 (ubc13), found in Schizosaccharomyces pombe (strain 972 / ATCC 24843) (Fission yeast).